Here is a 104-residue protein sequence, read N- to C-terminus: Large ribosomal subunit protein uL24 (104 aa).

This sequence belongs to the universal ribosomal protein uL24 family. As to quaternary structure, part of the 50S ribosomal subunit.

One of two assembly initiator proteins, it binds directly to the 5'-end of the 23S rRNA, where it nucleates assembly of the 50S subunit. Its function is as follows. One of the proteins that surrounds the polypeptide exit tunnel on the outside of the subunit. The polypeptide is Large ribosomal subunit protein uL24 (Pseudomonas syringae pv. syringae (strain B728a)).